The sequence spans 194 residues: Imidazoleglycerol-phosphate dehydratase (194 aa).

This sequence belongs to the imidazoleglycerol-phosphate dehydratase family.

It localises to the cytoplasm. The catalysed reaction is D-erythro-1-(imidazol-4-yl)glycerol 3-phosphate = 3-(imidazol-4-yl)-2-oxopropyl phosphate + H2O. Its pathway is amino-acid biosynthesis; L-histidine biosynthesis; L-histidine from 5-phospho-alpha-D-ribose 1-diphosphate: step 6/9. This is Imidazoleglycerol-phosphate dehydratase from Thermus thermophilus (strain ATCC BAA-163 / DSM 7039 / HB27).